Reading from the N-terminus, the 192-residue chain is BON1-associated protein 1 (192 aa).

One can recognise a C2 domain in the interval 1-119 (MIYFGRSIDN…RYSPEGHLNF (119 aa)).

As to quaternary structure, interacts with BON1 (via VWA domain), BON2 and BON3. In terms of tissue distribution, expressed in roots, leaves, stems and flowers.

The protein resides in the membrane. Negative regulator of cell death and defense responses. Exhibits calcium-dependent phospholipid binding properties. The protein is BON1-associated protein 1 (BAP1) of Arabidopsis thaliana (Mouse-ear cress).